The sequence spans 247 residues: Ubiquinone biosynthesis O-methyltransferase (247 aa).

R39, G70, D91, and M134 together coordinate S-adenosyl-L-methionine.

This sequence belongs to the methyltransferase superfamily. UbiG/COQ3 family.

The enzyme catalyses a 3-demethylubiquinol + S-adenosyl-L-methionine = a ubiquinol + S-adenosyl-L-homocysteine + H(+). It carries out the reaction a 3-(all-trans-polyprenyl)benzene-1,2-diol + S-adenosyl-L-methionine = a 2-methoxy-6-(all-trans-polyprenyl)phenol + S-adenosyl-L-homocysteine + H(+). It participates in cofactor biosynthesis; ubiquinone biosynthesis. Functionally, O-methyltransferase that catalyzes the 2 O-methylation steps in the ubiquinone biosynthetic pathway. The chain is Ubiquinone biosynthesis O-methyltransferase from Cereibacter sphaeroides (strain KD131 / KCTC 12085) (Rhodobacter sphaeroides).